We begin with the raw amino-acid sequence, 105 residues long: Late embryogenesis abundant protein Lea5-D (105 aa).

The tract at residues 48–67 (KVERRDAMKESSSSETRAYS) is disordered. Positions 57–67 (ESSSSETRAYS) are enriched in low complexity.

This sequence belongs to the LEA type 3 family.

This Gossypium hirsutum (Upland cotton) protein is Late embryogenesis abundant protein Lea5-D (LEA5-D).